We begin with the raw amino-acid sequence, 383 residues long: Seipin (383 aa).

Topologically, residues Met1–Leu27 are cytoplasmic. The helical transmembrane segment at Met28 to Leu48 threads the bilayer. Over Tyr49 to Asn242 the chain is Lumenal. N-linked (GlcNAc...) asparagine glycosylation is found at Asn88 and Asn242. Residues Phe243 to Trp263 form a helical membrane-spanning segment. At Pro264 to Ser383 the chain is on the cytoplasmic side. Residues Asn279 to Ser383 form a disordered region. Ser289 is modified (phosphoserine). Positions Gln292–Asp302 are enriched in polar residues. Positions Glu322–Asn332 are enriched in basic and acidic residues. Residues Ser342 and Ser345 each carry the phosphoserine modification. Over residues Thr353–Leu371 the composition is skewed to low complexity.

This sequence belongs to the seipin family. As to quaternary structure, undecamer (an oligomer having eleven subunits). Oligomerization is important for its function in lipid droplet formation. Interacts with LDAF1 to form an oligomeric complex. Interacts with RAB18. Interacts with ZFYVE1 in a RAB18-dependent manner. As to expression, expressed in the paraventricular nucleus of the hypothalamus (PVN) and brainstem dorsal vagal complex (DVC) in oxytocin and catecholaminergic neurons (at protein level). Highest expression detected in subcutaneous and epididymal white adipose tissue, brown adipose tissue and testis. Also expressed in brain, skeletal muscle and adrenal gland, with lower levels detected in liver, heart, kidney, spleen, lung and small intestine. In brain, detected in piriform cortex, olfactory tubercle, islands of Calleja, lateral septal nucleus, medial septal nucleus, nucleus of the vertical limb of the diagonal band, nucleus of the horizontal limb of the diagonal band, preoptic area, paraventricular thalamic nucleus, lateral globus pallidus, supraoptic nucleus, suprachiasmatic nucleus, subfornical organ, paraventricular nucleus of the hypothalamus, zona incerta, dorsomedial nucleus of the hypothalamus, ventromedial nucleus of the hypothalamus, arcuate nucleus of the hypothalamus, basomedial amygdaloid nucleus, medial amygdaloid nucleus, medial habenular, pyramidal cell layer of the hippocampus, granular layer of the dentate gyrus, posterior hypothalamus, supramammilliary nucleus, premammillary nucleus, nucleus of Darkschewitsch, Edinger-Westphal nucleus, ventral tegmental area, dorsal raphe nucleus, periaqueductal gray, median raphe nucleus, lateral parabrachial nucleus, dorsal tegmental nucleus, laterodorsal tegmental nucleus, locus coeruleus, Barrington's nucleus, medial vestibular nucleus, ambiguous nucleus, dorsal vagal complex and hypoglossal nucleus.

Its subcellular location is the endoplasmic reticulum membrane. The protein resides in the lipid droplet. Its function is as follows. Plays a crucial role in the formation of lipid droplets (LDs) which are storage organelles at the center of lipid and energy homeostasis. In association with LDAF1, defines the sites of LD formation in the ER. Also required for growth and maturation of small nascent LDs into larger mature LDs. Mediates the formation and/or stabilization of endoplasmic reticulum-lipid droplets (ER-LD) contacts, facilitating protein and lipid delivery from the ER into growing LDs. Regulates the maturation of ZFYVE1-positive nascent LDs and the function of the RAB18-ZFYVE1 complex in mediating the formation of ER-LD contacts. Binds anionic phospholipids including phosphatidic acid. Plays an important role in the differentiation and development of adipocytes. The sequence is that of Seipin from Mus musculus (Mouse).